Consider the following 1433-residue polypeptide: DNA-directed RNA polymerase subunit beta' (1433 aa).

Residues cysteine 60, cysteine 62, cysteine 75, and cysteine 78 each contribute to the Zn(2+) site. Residues aspartate 449, aspartate 451, and aspartate 453 each contribute to the Mg(2+) site. Residues cysteine 777, cysteine 851, cysteine 858, and cysteine 861 each coordinate Zn(2+). Composition is skewed to acidic residues over residues 1383 to 1393 (DSEEEEEELSE) and 1411 to 1433 (EEDE…DDDD). Positions 1383–1433 (DSEEEEEELSELSEAAPVSTATLSKLVAEEDEDEDELEEEADDSDDEDDDD) are disordered.

The protein belongs to the RNA polymerase beta' chain family. In terms of assembly, the RNAP catalytic core consists of 2 alpha, 1 beta, 1 beta' and 1 omega subunit. When a sigma factor is associated with the core the holoenzyme is formed, which can initiate transcription. Requires Mg(2+) as cofactor. It depends on Zn(2+) as a cofactor.

The catalysed reaction is RNA(n) + a ribonucleoside 5'-triphosphate = RNA(n+1) + diphosphate. In terms of biological role, DNA-dependent RNA polymerase catalyzes the transcription of DNA into RNA using the four ribonucleoside triphosphates as substrates. In Leptospira biflexa serovar Patoc (strain Patoc 1 / Ames), this protein is DNA-directed RNA polymerase subunit beta'.